Reading from the N-terminus, the 386-residue chain is Myosin light chain kinase family member 4 (386 aa).

Phosphoserine is present on S100. One can recognise a Protein kinase domain in the interval V107–L361. ATP is bound by residues L113 to V121 and K136. D227 functions as the Proton acceptor in the catalytic mechanism.

Belongs to the protein kinase superfamily. CAMK Ser/Thr protein kinase family.

The catalysed reaction is L-seryl-[protein] + ATP = O-phospho-L-seryl-[protein] + ADP + H(+). The enzyme catalyses L-threonyl-[protein] + ATP = O-phospho-L-threonyl-[protein] + ADP + H(+). This chain is Myosin light chain kinase family member 4 (Mylk4), found in Mus musculus (Mouse).